Here is a 270-residue protein sequence, read N- to C-terminus: Phosphatidylinositol transfer protein alpha isoform (270 aa).

The a 1,2-diacyl-sn-glycero-3-phospho-(1D-myo-inositol) site is built by threonine 58, lysine 60, glutamate 85, asparagine 89, threonine 96, and lysine 194. Lysine 215 carries the N6-acetyllysine modification. Basic and acidic residues predominate over residues 250 to 263; the sequence is TKRQLDEMRQKDPV. Residues 250 to 270 form a disordered region; that stretch reads TKRQLDEMRQKDPVKGMTADD.

The protein belongs to the PtdIns transfer protein family. PI transfer class I subfamily. Phosphorylated by PKC in a calcium and phosphatidylserine-dependent manner.

Its subcellular location is the cytoplasm. It localises to the nucleus. It catalyses the reaction a 1,2-diacyl-sn-glycero-3-phosphocholine(in) = a 1,2-diacyl-sn-glycero-3-phosphocholine(out). The catalysed reaction is a 1,2-diacyl-sn-glycero-3-phospho-(1D-myo-inositol)(in) = a 1,2-diacyl-sn-glycero-3-phospho-(1D-myo-inositol)(out). Its function is as follows. Catalyzes the transfer of phosphatidylinositol (PI) and phosphatidylcholine (PC) between membranes. Shows a preference for PI and PC containing shorter saturated or monosaturated acyl chains at the sn-1 and sn-2 positions. Preference order for PC is C16:1 &gt; C16:0 &gt; C18:1 &gt; C18:0 &gt; C20:4 and for PI is C16:1 &gt; C16:0 &gt; C18:1 &gt; C18:0 &gt; C20:4 &gt; C20:3. This is Phosphatidylinositol transfer protein alpha isoform (PITPNA) from Oryctolagus cuniculus (Rabbit).